A 502-amino-acid chain; its full sequence is Glutamate--tRNA ligase (502 aa).

The 'HIGH' region signature appears at 9 to 19 (PSPTGFPHVGT). Positions 250 to 254 (KLSKR) match the 'KMSKS' region motif. Lys253 contacts ATP.

It belongs to the class-I aminoacyl-tRNA synthetase family. Glutamate--tRNA ligase type 1 subfamily. In terms of assembly, monomer.

Its subcellular location is the cytoplasm. It catalyses the reaction tRNA(Glu) + L-glutamate + ATP = L-glutamyl-tRNA(Glu) + AMP + diphosphate. In terms of biological role, catalyzes the attachment of glutamate to tRNA(Glu) in a two-step reaction: glutamate is first activated by ATP to form Glu-AMP and then transferred to the acceptor end of tRNA(Glu). This is Glutamate--tRNA ligase from Acinetobacter baumannii (strain AYE).